We begin with the raw amino-acid sequence, 228 residues long: Octanoyltransferase (228 aa).

Residues 40–225 (GEEAERVWLV…SFERVFDAAP (186 aa)) form the BPL/LPL catalytic domain. Substrate-binding positions include 79–86 (RGGQWTYH), 156–158 (AIG), and 169–171 (GIA). Residue C187 is the Acyl-thioester intermediate of the active site.

This sequence belongs to the LipB family.

It is found in the cytoplasm. The catalysed reaction is octanoyl-[ACP] + L-lysyl-[protein] = N(6)-octanoyl-L-lysyl-[protein] + holo-[ACP] + H(+). The protein operates within protein modification; protein lipoylation via endogenous pathway; protein N(6)-(lipoyl)lysine from octanoyl-[acyl-carrier-protein]: step 1/2. Functionally, catalyzes the transfer of endogenously produced octanoic acid from octanoyl-acyl-carrier-protein onto the lipoyl domains of lipoate-dependent enzymes. Lipoyl-ACP can also act as a substrate although octanoyl-ACP is likely to be the physiological substrate. The protein is Octanoyltransferase of Acidiphilium cryptum (strain JF-5).